We begin with the raw amino-acid sequence, 708 residues long: Leukotoxin translocation ATP-binding protein LktB (708 aa).

The region spanning 1–126 (MEANHQRNDL…ACYQGQLILV (126 aa)) is the Peptidase C39 domain. The region spanning 155-437 (FLETLIVSIF…LAQLWQDFQQ (283 aa)) is the ABC transmembrane type-1 domain. The next 5 helical transmembrane spans lie at 159-179 (LIVS…FQVV), 192-212 (LNII…LSGL), 270-290 (ALTS…MWYY), 296-316 (LVIL…SPIL), and 389-409 (VMVI…LSIG). An ABC transporter domain is found at 469–704 (ISFKNIRFRY…SNGLYSYLHQ (236 aa)). Residue 503–510 (GRSGSGKS) coordinates ATP.

It belongs to the ABC transporter superfamily. Protein-1 exporter (TC 3.A.1.109) family. As to quaternary structure, homodimer.

The protein localises to the cell inner membrane. The catalysed reaction is ATP + H2O + proteinSide 1 = ADP + phosphate + proteinSide 2.. In terms of biological role, part of the ABC transporter complex LktBD involved in leukotoxin export. Transmembrane domains (TMD) form a pore in the inner membrane and the ATP-binding domain (NBD) is responsible for energy generation. The polypeptide is Leukotoxin translocation ATP-binding protein LktB (lktB) (Mannheimia haemolytica (Pasteurella haemolytica)).